The sequence spans 1214 residues: [F-actin]-monooxygenase mical1 (1214 aa).

A monooxygenase domain region spans residues 1–488; it reads MVNPLDSVNP…KRLYEAEEQE (488 aa). FAD contacts are provided by residues cysteine 96, 115–117, 122–124, phenylalanine 182, tyrosine 292, and aspartate 392; these read EKR and RNN. Positions 484 to 505 are disordered; sequence AEEQESKPNKLKKPDIKAKPRK. A Calponin-homology (CH) domain is found at 508–614; that stretch reads MKRLEELLSW…YLTQIRNALT (107 aa). The segment at 649–676 is disordered; it reads HKDRLASVKGPRQQNMKEKEEKKDVKEE. Residues 663-676 are compositionally biased toward basic and acidic residues; that stretch reads NMKEKEEKKDVKEE. The 63-residue stretch at 686–748 folds into the LIM zinc-binding domain; the sequence is EPCYFCKKHL…ELHSLAEEEE (63 aa). The Zn(2+) site is built by cysteine 688, cysteine 691, histidine 709, cysteine 712, cysteine 715, cysteine 718, cysteine 738, and histidine 741. The segment at 747–1019 is disordered; the sequence is EEGDEGHGGA…DDEDEDEEDL (273 aa). Acidic residues predominate over residues 796 to 815; the sequence is PDFDESTEFPAPDQDEPPDL. Over residues 828-841 the composition is skewed to polar residues; that stretch reads SAENTNMENQQHNI. Residues 910–922 are compositionally biased toward low complexity; sequence RGSSSAASTSSSS. Positions 974-987 are enriched in polar residues; that stretch reads SPWNLSSPRLQQRF. A compositionally biased stretch (acidic residues) spans 1003 to 1019; sequence VSEDDNEDDEDEDEEDL. Positions 1053–1199 constitute a bMERB domain; the sequence is KMTEIQRFHK…EVNDQFNSSL (147 aa). Positions 1061–1131 form a coiled coil; that stretch reads HKAQSIQRRL…DLMVASRQLE (71 aa). The interval 1194 to 1214 is disordered; that stretch reads QFNSSLDAKRRSTTASQVHWE.

Belongs to the Mical family. FAD is required as a cofactor.

It localises to the cytoplasm. It is found in the cytoskeleton. The protein resides in the midbody. The protein localises to the endosome membrane. The enzyme catalyses L-methionyl-[F-actin] + NADPH + O2 + H(+) = L-methionyl-(R)-S-oxide-[F-actin] + NADP(+) + H2O. The catalysed reaction is NADPH + O2 + H(+) = H2O2 + NADP(+). Monooxygenase that promotes depolymerization of F-actin by mediating oxidation of specific methionine residues on actin to form methionine-sulfoxide, resulting in actin filament disassembly and prevent repolymerization. May be involved in endosomal tubule extension and neosynthesized protein export. The chain is [F-actin]-monooxygenase mical1 (mical1) from Danio rerio (Zebrafish).